Reading from the N-terminus, the 362-residue chain is Probable dual-specificity RNA methyltransferase RlmN (362 aa).

Glutamate 105 (proton acceptor) is an active-site residue. The region spanning 111–344 is the Radical SAM core domain; it reads HNYGNSVCVT…VTIRREQGHD (234 aa). Cysteine 118 and cysteine 349 are disulfide-bonded. [4Fe-4S] cluster-binding residues include cysteine 125, cysteine 129, and cysteine 132. Residues 175–176, serine 207, 230–232, and asparagine 306 each bind S-adenosyl-L-methionine; these read GE and SLH. Cysteine 349 acts as the S-methylcysteine intermediate in catalysis.

Belongs to the radical SAM superfamily. RlmN family. [4Fe-4S] cluster serves as cofactor.

It localises to the cytoplasm. The enzyme catalyses adenosine(2503) in 23S rRNA + 2 reduced [2Fe-2S]-[ferredoxin] + 2 S-adenosyl-L-methionine = 2-methyladenosine(2503) in 23S rRNA + 5'-deoxyadenosine + L-methionine + 2 oxidized [2Fe-2S]-[ferredoxin] + S-adenosyl-L-homocysteine. The catalysed reaction is adenosine(37) in tRNA + 2 reduced [2Fe-2S]-[ferredoxin] + 2 S-adenosyl-L-methionine = 2-methyladenosine(37) in tRNA + 5'-deoxyadenosine + L-methionine + 2 oxidized [2Fe-2S]-[ferredoxin] + S-adenosyl-L-homocysteine. Its function is as follows. Specifically methylates position 2 of adenine 2503 in 23S rRNA and position 2 of adenine 37 in tRNAs. This chain is Probable dual-specificity RNA methyltransferase RlmN, found in Halalkalibacterium halodurans (strain ATCC BAA-125 / DSM 18197 / FERM 7344 / JCM 9153 / C-125) (Bacillus halodurans).